The chain runs to 372 residues: MWPFASVPAGAKCRLVETLPENMDFRSDHLTTFECFNEIITLAKKYIYIASFCCNPLSTTRGALIFDKLKEVSEKGIKIIVLLDERGKRNLGELQSHSPDINFITVNIDKKNNVGLLLGCFWVSDDERCYVGNASFTGGSIHTIKTLGVYSDYPPLATDLRRRFDTFKAFNSAKNSWLNLCSAACCLPVSTAYHIKNPIGGVFFTDSPEHLLGYSRDLDTDVVIDKLKSAKTSIDIEHLAIVPTTRVDGNSYYWPDIYNSIIEAAINRGVKIRLLVGNWDKNDVYSMATARSLDALCVQNDLSVKVFTIQNNTKLLIVDDEYVHITSANFDGTHYQNHGFVSFNSIDKQLVSEAKKIFERDWVSSHSKSLKI.

Positions 153-156 match the YPPL motif; sequence YPPL. 2 S-palmitoyl cysteine; by host lipidation sites follow: Cys185 and Cys186. A PLD phosphodiesterase domain is found at 307–334; that stretch reads FTIQNNTKLLIVDDEYVHITSANFDGTH.

The protein belongs to the orthopoxvirus OPG057 family. As to quaternary structure, interacts with protein OPG190. Palmitoylated. Attachment of the palmitate moiety is essential for correct intracellular targeting and protein function.

It is found in the virion membrane. Its subcellular location is the host Golgi apparatus. It localises to the host trans-Golgi network. The protein resides in the host endoplasmic reticulum membrane. The enzyme catalyses a 1,2-diacyl-sn-glycero-3-phosphocholine + H2O = a 1,2-diacyl-sn-glycero-3-phosphate + choline + H(+). Major envelope protein that plays a role in the biogenesis of the viral double membrane and in egress of virus from the host cell. Produces the wrapped form of virus that is required for cell-to-cell spread. Acts as a lipase with broad specificity including phospholipase C, phospholipase A, and triacylglycerol lipase activities. In Cynomys gunnisoni (Gunnison's prairie dog), this protein is Envelope phospholipase OPG057 (OPG057).